We begin with the raw amino-acid sequence, 361 residues long: uncharacterized protein (361 aa).

6 WD repeats span residues R57–K96, K103–H142, D146–L184, E187–D229, S237–I275, and S280–S318. Residues D311–L361 form a disordered region.

The protein localises to the nucleus. It is found in the nucleolus. This is an uncharacterized protein from Schizosaccharomyces pombe (strain 972 / ATCC 24843) (Fission yeast).